Reading from the N-terminus, the 790-residue chain is LMBR1 domain-containing protein 2 homolog B (790 aa).

Over residues 1–21 (MSSNTTTPTPTSTPTPTSSPS) the composition is skewed to low complexity. The interval 1–22 (MSSNTTTPTPTSTPTPTSSPSI) is disordered. 5 helical membrane passes run 34–54 (FGNLLFFAISLVLCGVVVLIG), 66–86 (IYATFFSFLGWFMCFSIAYLV), 128–148 (FLYFGSLILCWVIFPVLQSFS), 167–187 (VILYTFMFIAGLIGIIVILSV), and 195–215 (FLSFVMLLANVYGVILITITM). Residues 236–266 (LRNYRVEAVVLKTELEDVKRQLIDHLKLIKT) adopt a coiled-coil conformation. 3 helical membrane passes run 401–421 (FIIAGLVCVCLSGIILWSEIV), 442–462 (PGIGLQIFCFIPMIYMCVCSY), and 539–559 (FTLFFPIFMIVVCVISFFNLH). 3 disordered regions span residues 630 to 665 (SQLDGASGAHREPSIDSSNRYKPTPTKTSINIPKLS), 701 to 751 (LGEK…TKDK), and 765 to 790 (SFQDDDDHTFDDIEMGAYGTGRKNKK). The segment covering 644–665 (IDSSNRYKPTPTKTSINIPKLS) has biased composition (polar residues). Positions 706 to 734 (NASNNNNNNNNNNNNNNSNNKNSNNNNNS) are enriched in low complexity. A compositionally biased stretch (polar residues) spans 735 to 746 (ILTSNYESYSTP). Acidic residues predominate over residues 766–778 (FQDDDDHTFDDIE).

Belongs to the LIMR family.

Its subcellular location is the membrane. The protein is LMBR1 domain-containing protein 2 homolog B of Dictyostelium discoideum (Social amoeba).